A 510-amino-acid polypeptide reads, in one-letter code: Major facilitator superfamily domain-containing protein 8 (510 aa).

The Cytoplasmic portion of the chain corresponds to Met-1–Arg-38. A Dileucine internalization motif motif is present at residues Leu-14–Leu-15. The helical transmembrane segment at Val-39 to Trp-59 threads the bilayer. Topologically, residues Pro-60–Ser-72 are extracellular. Residues Phe-73 to Gly-93 traverse the membrane as a helical segment. Residues Leu-94 to Glu-103 lie on the Cytoplasmic side of the membrane. A helical membrane pass occupies residues Pro-104–Val-124. Residues Pro-125–Tyr-132 lie on the Extracellular side of the membrane. Residues Met-133 to Ala-155 form a helical membrane-spanning segment. The Cytoplasmic portion of the chain corresponds to Gly-156–Ser-171. The helical transmembrane segment at Ala-172–Gly-192 threads the bilayer. At Glu-193–Thr-209 the chain is on the extracellular side. The chain crosses the membrane as a helical span at residues Ala-210–Phe-230. Topologically, residues Arg-231–Gln-264 are cytoplasmic. A helical membrane pass occupies residues Ile-265–Glu-285. Residues Thr-286–Gln-302 lie on the Extracellular side of the membrane. The chain crosses the membrane as a helical span at residues Ala-303–Leu-323. The Cytoplasmic portion of the chain corresponds to Thr-324–Arg-335. Residues Val-336–Gly-356 form a helical membrane-spanning segment. At Asn-357–Pro-406 the chain is on the extracellular side. 2 N-linked (GlcNAc...) asparagine glycosylation sites follow: Asn-369 and Asn-374. Residues Val-407–Cys-427 form a helical membrane-spanning segment. Residues Asn-428–Gly-445 lie on the Cytoplasmic side of the membrane. The chain crosses the membrane as a helical span at residues Leu-446–Val-466. Topologically, residues Ser-467–Arg-476 are extracellular. The helical transmembrane segment at Trp-477–Tyr-497 threads the bilayer. The Cytoplasmic portion of the chain corresponds to Lys-498–Leu-510.

Belongs to the major facilitator superfamily.

The protein resides in the lysosome membrane. May be a carrier that transport small solutes by using chemiosmotic ion gradients. This chain is Major facilitator superfamily domain-containing protein 8 (mfsd8), found in Xenopus laevis (African clawed frog).